The following is a 333-amino-acid chain: Anthranilate phosphoribosyltransferase (333 aa).

Residues glycine 81, glycine 84–aspartate 85, threonine 89, asparagine 91–threonine 94, lysine 109–serine 117, and alanine 121 contribute to the 5-phospho-alpha-D-ribose 1-diphosphate site. Glycine 81 contributes to the anthranilate binding site. Serine 93 provides a ligand contact to Mg(2+). An anthranilate-binding site is contributed by asparagine 112. Anthranilate is bound at residue arginine 167. Mg(2+)-binding residues include aspartate 225 and glutamate 226.

The protein belongs to the anthranilate phosphoribosyltransferase family. In terms of assembly, homodimer. Mg(2+) serves as cofactor.

It carries out the reaction N-(5-phospho-beta-D-ribosyl)anthranilate + diphosphate = 5-phospho-alpha-D-ribose 1-diphosphate + anthranilate. It functions in the pathway amino-acid biosynthesis; L-tryptophan biosynthesis; L-tryptophan from chorismate: step 2/5. Catalyzes the transfer of the phosphoribosyl group of 5-phosphorylribose-1-pyrophosphate (PRPP) to anthranilate to yield N-(5'-phosphoribosyl)-anthranilate (PRA). The chain is Anthranilate phosphoribosyltransferase from Actinobacillus succinogenes (strain ATCC 55618 / DSM 22257 / CCUG 43843 / 130Z).